The primary structure comprises 300 residues: N-acetylmuramic acid 6-phosphate etherase 2 (300 aa).

In terms of domain architecture, SIS spans 57-220 (ITAAFANGGR…TTGAMIRSGK (164 aa)). Catalysis depends on Glu85, which acts as the Proton donor. Residue Glu116 is part of the active site.

Belongs to the GCKR-like family. MurNAc-6-P etherase subfamily. Homodimer.

It carries out the reaction N-acetyl-D-muramate 6-phosphate + H2O = N-acetyl-D-glucosamine 6-phosphate + (R)-lactate. Its pathway is amino-sugar metabolism; 1,6-anhydro-N-acetylmuramate degradation. The protein operates within amino-sugar metabolism; N-acetylmuramate degradation. It functions in the pathway cell wall biogenesis; peptidoglycan recycling. Specifically catalyzes the cleavage of the D-lactyl ether substituent of MurNAc 6-phosphate, producing GlcNAc 6-phosphate and D-lactate. Together with AnmK, is also required for the utilization of anhydro-N-acetylmuramic acid (anhMurNAc) either imported from the medium or derived from its own cell wall murein, and thus plays a role in cell wall recycling. This chain is N-acetylmuramic acid 6-phosphate etherase 2, found in Vibrio parahaemolyticus serotype O3:K6 (strain RIMD 2210633).